A 184-amino-acid chain; its full sequence is ADP-ribosylation factor-like protein 8b (184 aa).

The segment at residues methionine 1–glutamine 18 is an intramembrane region (note=Mediates targeting to membranes). Residues asparagine 29–serine 34, methionine 48–threonine 51, aspartate 70–glutamine 74, and asparagine 129–aspartate 132 each bind GTP.

Belongs to the small GTPase superfamily. Arf family. As to quaternary structure, interacts with tubulin.

It localises to the late endosome membrane. The protein localises to the lysosome membrane. It is found in the cytoplasm. Its subcellular location is the cytoskeleton. The protein resides in the spindle. Functionally, may play a role in lysosome motility. May play a role in chromosome segregation. Its function is as follows. (Microbial infection) Component of tomato mosaic virus (ToMV) RNA replication complexes. Required for tobamovirus multiplication, especially for efficient negative-strand RNA synthesis and viral RNA capping. In Arabidopsis thaliana (Mouse-ear cress), this protein is ADP-ribosylation factor-like protein 8b.